The sequence spans 143 residues: Large ribosomal subunit protein uL11 (143 aa).

It belongs to the universal ribosomal protein uL11 family. In terms of assembly, part of the ribosomal stalk of the 50S ribosomal subunit. Interacts with L10 and the large rRNA to form the base of the stalk. L10 forms an elongated spine to which L12 dimers bind in a sequential fashion forming a multimeric L10(L12)X complex. In terms of processing, one or more lysine residues are methylated.

Its function is as follows. Forms part of the ribosomal stalk which helps the ribosome interact with GTP-bound translation factors. The protein is Large ribosomal subunit protein uL11 of Bifidobacterium longum (strain DJO10A).